A 459-amino-acid polypeptide reads, in one-letter code: uncharacterized protein (459 aa).

Transmembrane regions (helical) follow at residues 53 to 75 (IPLL…GLTL) and 111 to 133 (ARIA…CLCA). Positions 174–196 (HLDNPSAPHPSENPQSRAHPKQN) are disordered.

It localises to the cell membrane. This is an uncharacterized protein from Treponema pallidum (strain Nichols).